Here is a 303-residue protein sequence, read N- to C-terminus: D-alanine--D-alanine ligase (303 aa).

The ATP-grasp domain maps to 102–298 (RILLAAAGLP…YPELCDWMVR (197 aa)). Position 128 to 181 (128 to 181 (PLPAPYVIKPVAEGSSVGVEIVRTGDNRRAEIARTWRFGKEALVESFIPGRELT)) interacts with ATP. Mg(2+) contacts are provided by aspartate 251, glutamate 265, and asparagine 267.

This sequence belongs to the D-alanine--D-alanine ligase family. Mg(2+) serves as cofactor. The cofactor is Mn(2+).

The protein localises to the cytoplasm. The catalysed reaction is 2 D-alanine + ATP = D-alanyl-D-alanine + ADP + phosphate + H(+). It functions in the pathway cell wall biogenesis; peptidoglycan biosynthesis. Functionally, cell wall formation. In Gluconobacter oxydans (strain 621H) (Gluconobacter suboxydans), this protein is D-alanine--D-alanine ligase.